The chain runs to 225 residues: MTIKAILTDIEGTTSAVSFVFDVLFPYAARHLPDFVREHAGETEVAAQLAAVRAESGEADADVERVIAILLQWIAEDRKVTPLKALQGMVWAQGYRDGQLKGHVYPDAVQALREWKARGLDLYVYSSGSIQAQKLIFGCSEAGDLGSLFSGYFDTTSGPKRESASYARIAGAIGLPAAEILFLSDVVQELDAARDAGMRTLGLAREGGSLDGHPTVASFADILVE.

The protein belongs to the HAD-like hydrolase superfamily. MasA/MtnC family. Monomer. Mg(2+) serves as cofactor.

The catalysed reaction is 5-methylsulfanyl-2,3-dioxopentyl phosphate + H2O = 1,2-dihydroxy-5-(methylsulfanyl)pent-1-en-3-one + phosphate. Its pathway is amino-acid biosynthesis; L-methionine biosynthesis via salvage pathway; L-methionine from S-methyl-5-thio-alpha-D-ribose 1-phosphate: step 3/6. It participates in amino-acid biosynthesis; L-methionine biosynthesis via salvage pathway; L-methionine from S-methyl-5-thio-alpha-D-ribose 1-phosphate: step 4/6. Functionally, bifunctional enzyme that catalyzes the enolization of 2,3-diketo-5-methylthiopentyl-1-phosphate (DK-MTP-1-P) into the intermediate 2-hydroxy-3-keto-5-methylthiopentenyl-1-phosphate (HK-MTPenyl-1-P), which is then dephosphorylated to form the acireductone 1,2-dihydroxy-3-keto-5-methylthiopentene (DHK-MTPene). This is Enolase-phosphatase E1 from Pseudomonas aeruginosa (strain LESB58).